The sequence spans 410 residues: Thyroid hormone receptor alpha (410 aa).

Residues 1 to 32 (MEQKPSKVECGSDPEESSTRSPDGKRKRKNGQ) are disordered. The tract at residues 1 to 52 (MEQKPSKVECGSDPEESSTRSPDGKRKRKNGQCSLKTSMSGYIPSYLDKDEQ) is modulating. Zn(2+)-binding residues include cysteine 53, cysteine 56, cysteine 70, cysteine 73, cysteine 91, cysteine 97, cysteine 107, and cysteine 110. 2 consecutive NR C4-type zinc fingers follow at residues 53-73 (CVVCGDKATGYHYRCITCEGC) and 91-115 (CKYDSCCVIDKITRNQCQLCRFKKC). The nuclear receptor DNA-binding region spans 53–127 (CVVCGDKATG…VGMAMDLVLD (75 aa)). The 245-residue stretch at 163–407 (EEWDLIHVAT…PPLFLEVFED (245 aa)) folds into the NR LBD domain. Arginine 228 and serine 277 together coordinate 3,3',5-triiodo-L-thyronine.

The protein belongs to the nuclear hormone receptor family. NR1 subfamily. As to quaternary structure, binds DNA as a dimer; homodimer and heterodimer with RXRB. Interacts with NCOA3 and NCOA6 coactivators, leading to a strong increase of transcription of target genes. Probably interacts with SFPQ. Interacts with C1D. Interacts with AKAP13. Interacts with TP53INP2. Interacts with PER2. Interacts with TACC1. The interaction with isoform alpha-1, but not alpha-2, is decreased in the presence of thyroid hormone T3.

The protein localises to the nucleus. It is found in the cytoplasm. Nuclear hormone receptor that can act as a repressor or activator of transcription. High affinity receptor for thyroid hormones, including triiodothyronine and thyroxine. The sequence is that of Thyroid hormone receptor alpha (THRA) from Ovis aries (Sheep).